The following is a 254-amino-acid chain: 3-deoxy-manno-octulosonate cytidylyltransferase (254 aa).

It belongs to the KdsB family.

The protein resides in the cytoplasm. The enzyme catalyses 3-deoxy-alpha-D-manno-oct-2-ulosonate + CTP = CMP-3-deoxy-beta-D-manno-octulosonate + diphosphate. It participates in nucleotide-sugar biosynthesis; CMP-3-deoxy-D-manno-octulosonate biosynthesis; CMP-3-deoxy-D-manno-octulosonate from 3-deoxy-D-manno-octulosonate and CTP: step 1/1. Activates KDO (a required 8-carbon sugar) for incorporation into bacterial lipopolysaccharide in Gram-negative bacteria. This Lawsonia intracellularis (strain PHE/MN1-00) protein is 3-deoxy-manno-octulosonate cytidylyltransferase.